We begin with the raw amino-acid sequence, 238 residues long: Small ribosomal subunit protein uS2 (238 aa).

It belongs to the universal ribosomal protein uS2 family.

The protein is Small ribosomal subunit protein uS2 of Prochlorococcus marinus (strain SARG / CCMP1375 / SS120).